A 73-amino-acid polypeptide reads, in one-letter code: Small ribosomal subunit protein bS18 (73 aa).

It belongs to the bacterial ribosomal protein bS18 family. Part of the 30S ribosomal subunit. Forms a tight heterodimer with protein bS6.

Its function is as follows. Binds as a heterodimer with protein bS6 to the central domain of the 16S rRNA, where it helps stabilize the platform of the 30S subunit. This chain is Small ribosomal subunit protein bS18, found in Coxiella burnetii (strain Dugway 5J108-111).